A 327-amino-acid polypeptide reads, in one-letter code: Gonadotropin-releasing hormone receptor (327 aa).

Over 1 to 38 (MANNASLEQDPNHCSAINNSIPLIQGKLPTLTVSGKIR) the chain is Extracellular. N-linked (GlcNAc...) asparagine glycosylation is found at Asn4 and Asn18. The chain crosses the membrane as a helical span at residues 39–58 (VTVTFFLFLLSTAFNASFLL). Residues 59–77 (KLQKWTQKRKKGKKLSRMK) are Cytoplasmic-facing. The chain crosses the membrane as a helical span at residues 78-97 (VLLKHLTLANLLETLIVMPL). The Extracellular portion of the chain corresponds to 98–115 (DGMWNITVQWYAGEFLCK). An N-linked (GlcNAc...) asparagine glycan is attached at Asn102. Cysteines 114 and 195 form a disulfide. A helical membrane pass occupies residues 116 to 137 (VLSYLKLFSMYAPAFMMVVISL). At 138–164 (DRSLAITQPLAVQSNSKLEQSMISLAW) the chain is on the cytoplasmic side. A helical transmembrane segment spans residues 165–184 (ILSIVFAGPQLYIFRMIYLA). Residues 185-211 (DGSGPTVFSQCVTHCSFPQWWHQAFYN) are Extracellular-facing. The helical transmembrane segment at 212-231 (FFTFGCLFIIPLLIMLICNA) threads the bilayer. Over 232–280 (KIIFALTRVLHQDPRKLQLNQSKNNIPRARLRTLKMTVAFATSFVVCWT) the chain is Cytoplasmic. Residues 281–299 (PYYVLGIWYWFDPEMLNRV) traverse the membrane as a helical segment. Residues 300 to 305 (SEPVNH) lie on the Extracellular side of the membrane. The chain crosses the membrane as a helical span at residues 306–325 (FFFLFAFLNPCFDPLIYGYF). Residues 326 to 327 (SL) are Cytoplasmic-facing.

Belongs to the G-protein coupled receptor 1 family. As to expression, pituitary gland.

It localises to the cell membrane. In terms of biological role, receptor for gonadotropin releasing hormone (GnRH) that mediates the action of GnRH to stimulate the secretion of the gonadotropic hormones luteinizing hormone (LH) and follicle-stimulating hormone (FSH). This receptor mediates its action by association with G-proteins that activate a phosphatidylinositol-calcium second messenger system. The polypeptide is Gonadotropin-releasing hormone receptor (Gnrhr) (Mus musculus (Mouse)).